We begin with the raw amino-acid sequence, 888 residues long: Potassium channel AKT6 (888 aa).

Over 1–84 (MEKKKVWFWG…PFDPRYRAWE (84 aa)) the chain is Cytoplasmic. The disordered stretch occupies residues 10 to 31 (GVKDDGEGGGGRGGGRTKDAED). Residues 85–105 (TFLVFLVLYTAWASPFEFGFL) traverse the membrane as a helical segment. Topologically, residues 106 to 113 (QKPRPPLS) are extracellular. Residues 114-134 (ILDNIVNGFFAVDIVLTFFVA) form a helical membrane-spanning segment. At 135–155 (FLDKVTYLLVDDPKRIAWRYA) the chain is on the cytoplasmic side. The chain crosses the membrane as a helical span at residues 156-176 (STWLIFDVVSTFPYEIFGSLL). Residues 177–184 (HESIQGYG) are Extracellular-facing. Residues 185 to 205 (IFSMLRLWRLRRVSNCFARLE) form a helical; Voltage-sensor membrane-spanning segment. The Cytoplasmic portion of the chain corresponds to 206-219 (KDRKYSYFWVRCSK). A helical membrane pass occupies residues 220-240 (LLLVTLFVIHCGACFLYSIAA). Over 241–267 (HYPDPSKTFMALTDENWKESPIAVRYN) the chain is Extracellular. An intramembrane region (pore-forming) is located at residues 268 to 287 (TAMYWSITTFSTTGYGDIHG). Over 288-291 (VNSR) the chain is Extracellular. Residues 292-312 (EMTFILFYMVFNLGLSAYIIG) form a helical membrane-spanning segment. At 313–888 (NMTNLVVHVT…GDFLLLSRDP (576 aa)) the chain is on the cytoplasmic side. 398–519 (LFHGISNDLL…IMNNLLQHLK (122 aa)) is an a nucleoside 3',5'-cyclic phosphate binding site. ANK repeat units follow at residues 543–572 (DLPLSLCFAAARGDDLLLHQLLRRGSSPNE), 576–605 (DGRTALHIAASKGSHYCVVLLLEHGADPNI), 609–638 (EGNVPLWEAIIGRHREIAKLLAENGAKLSL), 640–669 (SVSYFSGLAVEKNCLDALKDIIKYGGDVTL), and 673–702 (NGTTALHRAVSEGHLEIVKFLLDQGADLDW). Residues 822–888 (RVTISSPENG…GDFLLLSRDP (67 aa)) enclose the KHA domain.

It belongs to the potassium channel family. Plant (TC 1.A.1.4) subfamily. In terms of assembly, the potassium channel is probably composed of a homo- or heterotetrameric complex of pore-forming subunits. As to expression, predominantly expressed in flowers; especially in pollen.

The protein resides in the membrane. Its function is as follows. Highly selective inward-rectifying potassium channel that could mediate potassium uptake in the pollen membrane. Plays an important role in pollen tube development. Assuming opened or closed conformations in response to the voltage difference across the membrane, the channel is activated by hyperpolarization. May interact with the cytoskeleton or with regulatory proteins. The polypeptide is Potassium channel AKT6 (AKT6) (Arabidopsis thaliana (Mouse-ear cress)).